The chain runs to 48 residues: Mating-type pheromone BAP1(2) (48 aa).

Cys-45 bears the Cysteine methyl ester mark. Cys-45 is lipidated: S-farnesyl cysteine. Residues 46 to 48 constitute a propeptide, removed in mature form; that stretch reads VRG.

Its subcellular location is the cell membrane. Functionally, activates B-regulated development. This is Mating-type pheromone BAP1(2) (BAP1(2)) from Schizophyllum commune (Split gill fungus).